The following is a 549-amino-acid chain: Arginine--tRNA ligase (549 aa).

A 'HIGH' region motif is present at residues 122-132 (ANPTGFLHLGH).

It belongs to the class-I aminoacyl-tRNA synthetase family. In terms of assembly, monomer.

The protein localises to the cytoplasm. The enzyme catalyses tRNA(Arg) + L-arginine + ATP = L-arginyl-tRNA(Arg) + AMP + diphosphate. The polypeptide is Arginine--tRNA ligase (Mycoplasmoides gallisepticum (strain R(low / passage 15 / clone 2)) (Mycoplasma gallisepticum)).